A 909-amino-acid chain; its full sequence is Protein translocase subunit SecA (909 aa).

Residues Q87, 105–109 (GEGKT), and D507 contribute to the ATP site. The disordered stretch occupies residues 857 to 909 (DTHSELAEEQPPVAENRENKQQPFVRKNEKVGRNDPCPCGSGKKYKQCHGKLN). The span at 871-889 (ENRENKQQPFVRKNEKVGR) shows a compositional bias: basic and acidic residues. Positions 893, 895, 904, and 905 each coordinate Zn(2+). Residues 899–909 (KKYKQCHGKLN) show a composition bias toward basic residues.

Belongs to the SecA family. As to quaternary structure, monomer and homodimer. Part of the essential Sec protein translocation apparatus which comprises SecA, SecYEG and auxiliary proteins SecDF-YajC and YidC. The cofactor is Zn(2+).

Its subcellular location is the cell inner membrane. The protein localises to the cytoplasm. The enzyme catalyses ATP + H2O + cellular proteinSide 1 = ADP + phosphate + cellular proteinSide 2.. Functionally, part of the Sec protein translocase complex. Interacts with the SecYEG preprotein conducting channel. Has a central role in coupling the hydrolysis of ATP to the transfer of proteins into and across the cell membrane, serving both as a receptor for the preprotein-SecB complex and as an ATP-driven molecular motor driving the stepwise translocation of polypeptide chains across the membrane. In Nitrosomonas europaea (strain ATCC 19718 / CIP 103999 / KCTC 2705 / NBRC 14298), this protein is Protein translocase subunit SecA.